The chain runs to 459 residues: tRNA modification GTPase MnmE (459 aa).

(6S)-5-formyl-5,6,7,8-tetrahydrofolate-binding residues include Arg23, Glu88, and Arg127. The 159-residue stretch at 223–381 folds into the TrmE-type G domain; it reads GLSVVIVGKP…IKNCIKELFF (159 aa). Residue Asn233 coordinates K(+). GTP-binding positions include 233–238, 252–258, and 277–280; these read NVGKSS, TDIPGTT, and DTAG. Ser237 contacts Mg(2+). 3 residues coordinate K(+): Thr252, Ile254, and Thr257. A Mg(2+)-binding site is contributed by Thr258. Lys459 provides a ligand contact to (6S)-5-formyl-5,6,7,8-tetrahydrofolate.

It belongs to the TRAFAC class TrmE-Era-EngA-EngB-Septin-like GTPase superfamily. TrmE GTPase family. In terms of assembly, homodimer. Heterotetramer of two MnmE and two MnmG subunits. K(+) serves as cofactor.

Its subcellular location is the cytoplasm. Functionally, exhibits a very high intrinsic GTPase hydrolysis rate. Involved in the addition of a carboxymethylaminomethyl (cmnm) group at the wobble position (U34) of certain tRNAs, forming tRNA-cmnm(5)s(2)U34. In Clostridium kluyveri (strain ATCC 8527 / DSM 555 / NBRC 12016 / NCIMB 10680 / K1), this protein is tRNA modification GTPase MnmE.